The sequence spans 116 residues: MESNLTTPAIVIFATAGCTDVWGDVLLGIEEEGIPFVIQESPSTDVIHNAWLAACQSPLLVGIGCSREKLVVHYKNLPTSAPLFTLTYQQDNHARRSIGNNAARLVKGIPFRECHS.

Residue glutamate 31 coordinates Mg(2+).

Belongs to the DdrB/PduH family. Forms a heterotetramer PduG(2)/PduH(2). Mg(2+) is required as a cofactor.

The protein resides in the bacterial microcompartment. The catalysed reaction is ATP + H2O = ADP + phosphate + H(+). It functions in the pathway polyol metabolism; 1,2-propanediol degradation. Its function is as follows. Small subunit of the propanediol dehydratase-reactivating factor (DDR), which reactivates suicidally inhibited adenosylcobalamin-dependent propanediol dehydratase (diol dehydratase, DDH) found in the bacterial microcompartment (BMC) dedicated to 1,2-propanediol (1,2-PD) degradation. Reactivates inactivated DDH in the presence of ATP, Mg(2+) and free adenosylcobalamin (AdoCbl), by mediating the exchange of the tightly bound damaged cofactor AdoCbl for a free intact one. Functionally, expression of a cosmid containing the full 21-gene pdu operon in E.coli allows E.coli to grow on 1,2-propanediol (1,2-PD) with the appearance of bacterial microcompartments (BMC) in its cytoplasm. The 1,2-PD-specific bacterial microcompartment (BMC) concentrates low levels of 1,2-PD catabolic enzymes, concentrates volatile reaction intermediates thus enhancing pathway flux and keeps the level of toxic, mutagenic propionaldehyde low. This is Propanediol dehydratase-reactivating factor small subunit from Citrobacter freundii.